Reading from the N-terminus, the 340-residue chain is SH2 domain-containing adapter protein D (340 aa).

Disordered regions lie at residues methionine 1–arginine 77, glycine 94–glutamate 186, and valine 198–aspartate 230. Over residues glutamate 98–aspartate 108 the composition is skewed to acidic residues. Basic and acidic residues predominate over residues proline 171–glutamate 186. One can recognise an SH2 domain in the interval tryptophan 240–valine 335.

Post-translationally, tyrosine phosphorylated by ABL.

In terms of biological role, may function as an adapter protein. The chain is SH2 domain-containing adapter protein D (SHD) from Homo sapiens (Human).